An 880-amino-acid polypeptide reads, in one-letter code: Valine--tRNA ligase (880 aa).

The short motif at 46–56 (PNVTGKLHLGH) is the 'HIGH' region element. Residues 520–524 (KMSKS) carry the 'KMSKS' region motif. K523 is a binding site for ATP. Residues 808 to 880 (LAGLINIEEE…KARIAELKEN (73 aa)) are a coiled coil.

It belongs to the class-I aminoacyl-tRNA synthetase family. ValS type 1 subfamily. Monomer.

Its subcellular location is the cytoplasm. The enzyme catalyses tRNA(Val) + L-valine + ATP = L-valyl-tRNA(Val) + AMP + diphosphate. In terms of biological role, catalyzes the attachment of valine to tRNA(Val). As ValRS can inadvertently accommodate and process structurally similar amino acids such as threonine, to avoid such errors, it has a 'posttransfer' editing activity that hydrolyzes mischarged Thr-tRNA(Val) in a tRNA-dependent manner. This is Valine--tRNA ligase from Lactococcus lactis subsp. lactis (strain IL1403) (Streptococcus lactis).